Consider the following 372-residue polypeptide: Chaperone protein DnaJ (372 aa).

A J domain is found at 5-70 (DYYDLLEVSR…EKRAGYDRYG (66 aa)). The CR-type zinc-finger motif lies at 134 to 212 (GIQAPIHYVT…CGGSGRKRDE (79 aa)). Cysteine 147, cysteine 150, cysteine 164, cysteine 167, cysteine 186, cysteine 189, cysteine 200, and cysteine 203 together coordinate Zn(2+). CXXCXGXG motif repeat units lie at residues 147-154 (CNTCQGTG), 164-171 (CNTCQGSG), 186-193 (CTTCYGEG), and 200-207 (CKKCGGSG).

Belongs to the DnaJ family. Homodimer. Requires Zn(2+) as cofactor.

The protein localises to the cytoplasm. Its function is as follows. Participates actively in the response to hyperosmotic and heat shock by preventing the aggregation of stress-denatured proteins and by disaggregating proteins, also in an autonomous, DnaK-independent fashion. Unfolded proteins bind initially to DnaJ; upon interaction with the DnaJ-bound protein, DnaK hydrolyzes its bound ATP, resulting in the formation of a stable complex. GrpE releases ADP from DnaK; ATP binding to DnaK triggers the release of the substrate protein, thus completing the reaction cycle. Several rounds of ATP-dependent interactions between DnaJ, DnaK and GrpE are required for fully efficient folding. Also involved, together with DnaK and GrpE, in the DNA replication of plasmids through activation of initiation proteins. The chain is Chaperone protein DnaJ from Wolbachia pipientis subsp. Culex pipiens (strain wPip).